We begin with the raw amino-acid sequence, 258 residues long: UPF0246 protein Pnap_3166 (258 aa).

Belongs to the UPF0246 family.

The sequence is that of UPF0246 protein Pnap_3166 from Polaromonas naphthalenivorans (strain CJ2).